A 260-amino-acid polypeptide reads, in one-letter code: Beta-lactamase SHV-6 (260 aa).

A signal peptide spans 1–11 (LLATLPLAVHA). Catalysis depends on Ser56, which acts as the Acyl-ester intermediate. The cysteines at positions 63 and 109 are disulfide-linked. Catalysis depends on Glu154, which acts as the Proton acceptor. Position 220–222 (220–222 (KTG)) interacts with substrate.

Belongs to the class-A beta-lactamase family.

The catalysed reaction is a beta-lactam + H2O = a substituted beta-amino acid. SHV enzymes hydrolyze broad spectrum cephalosporins notably cefotaxime and ceftazidime. This is Beta-lactamase SHV-6 (bla) from Klebsiella pneumoniae.